Reading from the N-terminus, the 401-residue chain is Renin-2 (401 aa).

A signal peptide spans 1-25 (MDRRRMPLWALLLLWSPCTFSLPTG). Positions 26-63 (TTFERIPLKKMPSVREILEERGVDMTRLSAEWDVFTKR) are cleaved as a propeptide — activation peptide. In terms of domain architecture, Peptidase A1 spans 83-398 (YYGEIGIGTP…DRHNNRIGFA (316 aa)). The active site involves aspartate 101. Cystine bridges form between cysteine 114–cysteine 121 and cysteine 277–cysteine 281. Aspartate 286 is a catalytic residue. Cysteine 320 and cysteine 357 are oxidised to a cystine.

Belongs to the peptidase A1 family. In terms of assembly, dimer of a heavy chain and a light chain joined by a disulfide bond. In terms of tissue distribution, submandibular gland.

It localises to the secreted. The catalysed reaction is Cleavage of Leu-|-Xaa bond in angiotensinogen to generate angiotensin I.. Renin is a highly specific endopeptidase, related to pepsin, whose only known function is to generate angiotensin I from angiotensinogen in the plasma, initiating a cascade of reactions that produce an elevation of blood pressure and increased sodium retention by the kidney. This Mus musculus (Mouse) protein is Renin-2.